The chain runs to 129 residues: Large ribosomal subunit protein uL22 (129 aa).

Belongs to the universal ribosomal protein uL22 family. As to quaternary structure, part of the 50S ribosomal subunit.

In terms of biological role, this protein binds specifically to 23S rRNA; its binding is stimulated by other ribosomal proteins, e.g. L4, L17, and L20. It is important during the early stages of 50S assembly. It makes multiple contacts with different domains of the 23S rRNA in the assembled 50S subunit and ribosome. Its function is as follows. The globular domain of the protein is located near the polypeptide exit tunnel on the outside of the subunit, while an extended beta-hairpin is found that lines the wall of the exit tunnel in the center of the 70S ribosome. This chain is Large ribosomal subunit protein uL22, found in Mesorhizobium japonicum (strain LMG 29417 / CECT 9101 / MAFF 303099) (Mesorhizobium loti (strain MAFF 303099)).